We begin with the raw amino-acid sequence, 340 residues long: Phenylalanine--tRNA ligase alpha subunit (340 aa).

Residue Glu254 participates in Mg(2+) binding.

This sequence belongs to the class-II aminoacyl-tRNA synthetase family. Phe-tRNA synthetase alpha subunit type 1 subfamily. In terms of assembly, tetramer of two alpha and two beta subunits. Mg(2+) serves as cofactor.

The protein localises to the cytoplasm. The catalysed reaction is tRNA(Phe) + L-phenylalanine + ATP = L-phenylalanyl-tRNA(Phe) + AMP + diphosphate + H(+). This Caldicellulosiruptor bescii (strain ATCC BAA-1888 / DSM 6725 / KCTC 15123 / Z-1320) (Anaerocellum thermophilum) protein is Phenylalanine--tRNA ligase alpha subunit.